The primary structure comprises 391 residues: Formate-dependent phosphoribosylglycinamide formyltransferase (391 aa).

N(1)-(5-phospho-beta-D-ribosyl)glycinamide contacts are provided by residues 18–19 and glutamate 78; that span reads EL. Residues arginine 110, lysine 151, 156–161, 191–194, and glutamate 199 each bind ATP; these read SSGKGQ and EEFI. The ATP-grasp domain maps to 115–305; it reads DLASKDLKIK…EFELHLRAFL (191 aa). Positions 264 and 276 each coordinate Mg(2+). N(1)-(5-phospho-beta-D-ribosyl)glycinamide contacts are provided by residues aspartate 283, lysine 353, and 360 to 361; that span reads RR.

Belongs to the PurK/PurT family. In terms of assembly, homodimer.

It carries out the reaction N(1)-(5-phospho-beta-D-ribosyl)glycinamide + formate + ATP = N(2)-formyl-N(1)-(5-phospho-beta-D-ribosyl)glycinamide + ADP + phosphate + H(+). Its pathway is purine metabolism; IMP biosynthesis via de novo pathway; N(2)-formyl-N(1)-(5-phospho-D-ribosyl)glycinamide from N(1)-(5-phospho-D-ribosyl)glycinamide (formate route): step 1/1. Functionally, involved in the de novo purine biosynthesis. Catalyzes the transfer of formate to 5-phospho-ribosyl-glycinamide (GAR), producing 5-phospho-ribosyl-N-formylglycinamide (FGAR). Formate is provided by PurU via hydrolysis of 10-formyl-tetrahydrofolate. The protein is Formate-dependent phosphoribosylglycinamide formyltransferase of Prochlorococcus marinus (strain MIT 9301).